Here is a 1547-residue protein sequence, read N- to C-terminus: Fatty acid synthase subunit alpha (1547 aa).

The segment at 94–121 (TLPEAHPPPPIDSHQEPSTQTQATHRSA) is disordered. A compositionally biased stretch (polar residues) spans 109 to 118 (EPSTQTQATH). In terms of domain architecture, Carrier spans 145–221 (LPVSTIVRSL…ETMSIGHNGR (77 aa)). The residue at position 180 (Ser-180) is an O-(pantetheine 4'-phosphoryl)serine. The tract at residues 563–798 (GKNVLITGAG…ATLMGGTITT (236 aa)) is ketoreductase (KR) domain. Residues 1004–1476 (KESLQEIVLQ…QKGSQAILIH (473 aa)) enclose the Ketosynthase family 3 (KS3) domain. Catalysis depends on for beta-ketoacyl synthase activity residues Cys-1190 and His-1442.

The protein belongs to the thiolase-like superfamily. Fungal fatty acid synthetase subunit alpha family. It depends on pantetheine 4'-phosphate as a cofactor.

It carries out the reaction acetyl-CoA + n malonyl-CoA + 2n NADPH + 4n H(+) = a long-chain-acyl-CoA + n CoA + n CO2 + 2n NADP(+).. It catalyses the reaction a fatty acyl-[ACP] + malonyl-[ACP] + H(+) = a 3-oxoacyl-[ACP] + holo-[ACP] + CO2. The enzyme catalyses a (3R)-hydroxyacyl-[ACP] + NADP(+) = a 3-oxoacyl-[ACP] + NADPH + H(+). It functions in the pathway mycotoxin biosynthesis; HC-toxin biosynthesis. Fatty acid synthase alpha subunit, part of the diffuse TOX2 gene cluster that mediates the biosynthesis of the HC-toxin, cyclic tetrapeptide of structure cyclo(D-Pro-L-Ala-D-Ala-L-Aeo), where Aeo stands for 2-amino-9,10-epoxi-8-oxodecanoic acid. HC-toxin is a determinant of specificity and virulence in the interaction between the producing fungus and its host, maize. TOXH contribute to the synthesis of the decanoic backbone of 2-amino-9,10-epoxi-8-oxodecanoic acid, an essential precursor for the production of the major forms of HC-toxin by the non-ribosomal peptide synthetase HTS1. The protein is Fatty acid synthase subunit alpha of Cochliobolus carbonum (Maize leaf spot fungus).